A 135-amino-acid chain; its full sequence is Large ribosomal subunit protein uL16 (135 aa).

Belongs to the universal ribosomal protein uL16 family. As to quaternary structure, part of the 50S ribosomal subunit.

In terms of biological role, binds 23S rRNA and is also seen to make contacts with the A and possibly P site tRNAs. The protein is Large ribosomal subunit protein uL16 of Bdellovibrio bacteriovorus (strain ATCC 15356 / DSM 50701 / NCIMB 9529 / HD100).